The chain runs to 246 residues: MNETPAVPPSPEVEGSLNEQISHRRRILAVLDAMKDGRALLSARIENQRGYFNTTLLKIDAEKGYVFLDELAPADGHEKIAVGQTLHLYGFYNNLPAHFAIEVIHVGEHEGIAFYAGPLPKLIHYQQKRAHFRAYVGLGKELKVRLRKGDGAQISGRLQDISLGGFGALMPADSVFEDLEIVEVEALELPDHHAIACSAEIRHSHPTQGRVHIGARFTQLAPQAERQLLQAIVELEREQLRKQSRD.

A PilZ domain is found at 128 to 232 (KRAHFRAYVG…QAERQLLQAI (105 aa)).

The protein belongs to the YcgR family. Monomer. Interacts with the flagellar basal bodies.

It localises to the bacterial flagellum basal body. In terms of biological role, acts as a flagellar brake, regulating swimming and swarming in a bis-(3'-5') cyclic diguanylic acid (c-di-GMP)-dependent manner. Binds 1 c-di-GMP dimer per subunit. Increasing levels of c-di-GMP lead to decreased motility. The sequence is that of Flagellar brake protein YcgR from Thioalkalivibrio sulfidiphilus (strain HL-EbGR7).